The sequence spans 1296 residues: Capping protein, Arp2/3 and myosin-I linker protein 2 (1296 aa).

15 LRR repeats span residues 63–87 (DCTFSYLEVQAMALQETPPRVTFEL), 88–110 (ESLPELVLEFPCVAALEQLAQHV), 248–271 (ELVLEACGLRGDFVRRLAQALAGH), 273–296 (NSGLRELSLSGNLLDDRGMRALGR), 305–328 (DSTLTHLDLSGNPGALGPSQDSGG), 363–386 (CSSLTHLEASRNIFSRMKSQAAPA), 395–415 (TRMLRHLGLAGCKLPPEALRA), 426–448 (IHDLHLDLSACELRSVGAQVIQD), 453–477 (AGALSSLDLSDNGFGSDMVTLVLAI), 480–506 (SRSLKHVALGRNFNVRCKETLDDVLHR), 515–538 (DCPLQSLSVAESRLKQGASILIRA), 542–565 (NPKLTALDISGNAIGDAGAKMLAK), 570–594 (NTRLRSVIWDRNNTSALGLLDVAQA), 598–621 (NHSLKSMPLPLNDVTQAHRSRPEL), and 836–859 (TMAPAVPPLGGNELSPLETGGLEE). A tropomodulin-like region spans residues 507 to 601 (IAQLMQDDDC…AQALEQNHSL (95 aa)). Residues 975-1002 (ATPVPRTLRKKLGTLFAFKKPRSTRGPR) form a necessary for localization at the cell membrane region. The segment at 988–1296 (TLFAFKKPRS…TDQRGGGPNP (309 aa)) is disordered. At serine 1008 the chain carries Phosphoserine. 2 stretches are compositionally biased toward basic and acidic residues: residues 1079 to 1091 (RPDKRRPLERGDT) and 1118 to 1134 (ESKRKQSKDGEIKKAGS). Serine 1134 bears the Phosphoserine mark. Threonine 1145 is modified (phosphothreonine). Residues 1176 to 1185 (TWKTLGQQLN) show a composition bias toward polar residues. Residue arginine 1191 is modified to Omega-N-methylarginine. Composition is skewed to pro residues over residues 1199–1209 (PGPPSPCPSPS) and 1267–1285 (PLPPYPTEPSSPERSPPSP). Residues serine 1203 and serine 1281 each carry the phosphoserine modification.

It belongs to the CARMIL family. Forms homodimers. Interacts (via C-terminus) with heterodimeric capping protein (CP); the interaction inhibits CP activity and hence promotes actin polymerization at the barbed end of actin filaments.

The protein localises to the cytoplasm. Its subcellular location is the cytoskeleton. The protein resides in the cell membrane. It is found in the cell projection. It localises to the lamellipodium. The protein localises to the ruffle. Functionally, cell membrane-cytoskeleton-associated protein that plays a role in the regulation of actin polymerization at the barbed end of actin filaments. Prevents F-actin heterodimeric capping protein (CP) activity at the leading edges of migrating cells, and hence generates uncapped barbed ends and enhances actin polymerization. Plays a role in cell protrusion formations; involved in cell polarity, lamellipodial assembly, membrane ruffling and macropinosome formations. Involved as well in cell migration and invadopodia formation during wound healing. Required for CD28-mediated stimulation of NF-kappa-B signaling, involved in naive T cells activation, maturation into T memory cells, and differentiation into T helper cells. Required for CD28-mediated differentiation of T regulatory cells. The chain is Capping protein, Arp2/3 and myosin-I linker protein 2 from Mus musculus (Mouse).